Here is a 474-residue protein sequence, read N- to C-terminus: UDP-N-acetylmuramate--L-alanine ligase (474 aa).

108–114 (GTHGKTT) contacts ATP.

The protein belongs to the MurCDEF family.

The protein localises to the cytoplasm. It carries out the reaction UDP-N-acetyl-alpha-D-muramate + L-alanine + ATP = UDP-N-acetyl-alpha-D-muramoyl-L-alanine + ADP + phosphate + H(+). Its pathway is cell wall biogenesis; peptidoglycan biosynthesis. Cell wall formation. This chain is UDP-N-acetylmuramate--L-alanine ligase, found in Chloroflexus aggregans (strain MD-66 / DSM 9485).